We begin with the raw amino-acid sequence, 706 residues long: ABC transporter D family member 2, chloroplastic (706 aa).

A chloroplast-targeting transit peptide spans 1–44; the sequence is MILMITAPVCPPHLLLRHSSLLRHESSIGNFHRKKNPRFRTVSC. Ser-45 carries the N-acetylserine modification. Transmembrane regions (helical) follow at residues 88-108, 124-144, 200-222, 237-257, and 326-346; these read LAAV…FNFL, FTKQ…FFVL, TALS…SNIL, SFGG…LNFL, and ILPV…FGVI. Residues 88-372 form the ABC transmembrane type-1 domain; sequence LAAVFALTLA…VVYQFQAISS (285 aa). An ABC transporter domain is found at 430 to 697; sequence LEIEELTLQT…DAQDSLYGRL (268 aa). 464-471 provides a ligand contact to ATP; it reads GPSGSGKT. The disordered stretch occupies residues 545 to 569; the sequence is TTPGGSNIDGSPPLLIREDGNEKPT. Basic and acidic residues predominate over residues 560-569; the sequence is IREDGNEKPT.

It belongs to the ABC transporter superfamily. ABCD family. Peroxisomal fatty acyl CoA transporter (TC 3.A.1.203) subfamily. In terms of assembly, homodimer or heterodimer.

It localises to the membrane. Its subcellular location is the plastid. The protein localises to the chloroplast. The sequence is that of ABC transporter D family member 2, chloroplastic (ABCC2) from Arabidopsis thaliana (Mouse-ear cress).